Here is a 39-residue protein sequence, read N- to C-terminus: Cytochrome b559 subunit beta (39 aa).

Residues 14-30 (WLAIHGLAVPTVFFLGS) form a helical membrane-spanning segment. His18 lines the heme pocket.

In terms of assembly, heterodimer of an alpha subunit and a beta subunit. PSII is composed of 1 copy each of membrane proteins PsbA, PsbB, PsbC, PsbD, PsbE, PsbF, PsbH, PsbI, PsbJ, PsbK, PsbL, PsbM, PsbT, PsbX, PsbY, PsbZ, Psb30/Ycf12, at least 3 peripheral proteins of the oxygen-evolving complex and a large number of cofactors. It forms dimeric complexes. The cofactor is heme b. Post-translationally, the N-terminus is blocked.

The protein localises to the plastid. Its subcellular location is the chloroplast thylakoid membrane. Functionally, this b-type cytochrome is tightly associated with the reaction center of photosystem II (PSII). PSII is a light-driven water:plastoquinone oxidoreductase that uses light energy to abstract electrons from H(2)O, generating O(2) and a proton gradient subsequently used for ATP formation. It consists of a core antenna complex that captures photons, and an electron transfer chain that converts photonic excitation into a charge separation. The chain is Cytochrome b559 subunit beta from Spinacia oleracea (Spinach).